A 166-amino-acid polypeptide reads, in one-letter code: HTH-type transcriptional regulator PecS (166 aa).

Positions 25 to 160 (PMLVIGTLSR…LRALLGRVEK (136 aa)) constitute an HTH marR-type domain.

It is found in the cytoplasm. The presence of PecM is required to ensure the full regulation of the pecS-pecM intergenic region by PecS. Its function is as follows. Negatively regulates the expression of genes encoding pectinase and cellulase, which play a major role in virulence, and the expression of the blue pigment indigoidine, which is implicated in pathogenicity and protection from oxidative stress. Represses the expression of genes involved in indigoidine biosynthesis by binding to indA and indC promoter regions. Also binds to promoter sites in the pecS-pecM intergenic region and negatively autoregulates its expression as well as that of pecM. This chain is HTH-type transcriptional regulator PecS, found in Dickeya dadantii (strain 3937) (Erwinia chrysanthemi (strain 3937)).